Here is a 153-residue protein sequence, read N- to C-terminus: ATP synthase subunit b' (153 aa).

The helical transmembrane segment at 23–40 threads the bilayer; sequence LMAIQVVALTYILNSLFF.

This sequence belongs to the ATPase B chain family. In terms of assembly, F-type ATPases have 2 components, F(1) - the catalytic core - and F(0) - the membrane proton channel. F(1) has five subunits: alpha(3), beta(3), gamma(1), delta(1), epsilon(1). F(0) has four main subunits: a(1), b(1), b'(1) and c(10-14). The alpha and beta chains form an alternating ring which encloses part of the gamma chain. F(1) is attached to F(0) by a central stalk formed by the gamma and epsilon chains, while a peripheral stalk is formed by the delta, b and b' chains.

It is found in the cellular thylakoid membrane. F(1)F(0) ATP synthase produces ATP from ADP in the presence of a proton or sodium gradient. F-type ATPases consist of two structural domains, F(1) containing the extramembraneous catalytic core and F(0) containing the membrane proton channel, linked together by a central stalk and a peripheral stalk. During catalysis, ATP synthesis in the catalytic domain of F(1) is coupled via a rotary mechanism of the central stalk subunits to proton translocation. Functionally, component of the F(0) channel, it forms part of the peripheral stalk, linking F(1) to F(0). The b'-subunit is a diverged and duplicated form of b found in plants and photosynthetic bacteria. The sequence is that of ATP synthase subunit b' from Prochlorococcus marinus (strain MIT 9215).